The following is a 307-amino-acid chain: Nucleotide-binding protein AAur_2084 (307 aa).

The tract at residues Met1–Pro21 is disordered. Gly30–Ser37 contacts ATP. Asp81–Ser84 contacts GTP.

Belongs to the RapZ-like family.

Functionally, displays ATPase and GTPase activities. This is Nucleotide-binding protein AAur_2084 from Paenarthrobacter aurescens (strain TC1).